The primary structure comprises 360 residues: Peptide chain release factor 1 (360 aa).

Position 235 is an N5-methylglutamine (glutamine 235).

The protein belongs to the prokaryotic/mitochondrial release factor family. Methylated by PrmC. Methylation increases the termination efficiency of RF1.

The protein resides in the cytoplasm. Peptide chain release factor 1 directs the termination of translation in response to the peptide chain termination codons UAG and UAA. This Leptothrix cholodnii (strain ATCC 51168 / LMG 8142 / SP-6) (Leptothrix discophora (strain SP-6)) protein is Peptide chain release factor 1.